The primary structure comprises 107 residues: Flagellar transcriptional regulator FlhD (107 aa).

The protein belongs to the FlhD family. In terms of assembly, homodimer; disulfide-linked. Forms a heterohexamer composed of two FlhC and four FlhD subunits. Each FlhC binds a FlhD dimer, forming a heterotrimer, and a hexamer assembles by dimerization of two heterotrimers.

It is found in the cytoplasm. Its function is as follows. Functions in complex with FlhC as a master transcriptional regulator that regulates transcription of several flagellar and non-flagellar operons by binding to their promoter region. Activates expression of class 2 flagellar genes, including fliA, which is a flagellum-specific sigma factor that turns on the class 3 genes. Also regulates genes whose products function in a variety of physiological pathways. This Bordetella pertussis (strain Tohama I / ATCC BAA-589 / NCTC 13251) protein is Flagellar transcriptional regulator FlhD.